A 1272-amino-acid chain; its full sequence is uncharacterized protein (1272 aa).

Coiled coils occupy residues 185–212 (IEFL…EAVN), 246–274 (KNSA…YLDA), and 607–640 (ALGK…NTVI). Positions 1179–1231 (ELPETSQQPVVPTPPATRPSSPIPPESDILTEEEQLEEQPPRQQQATRKTTTT) are disordered. The segment covering 1189 to 1203 (VPTPPATRPSSPIPP) has biased composition (pro residues). Residues 1219-1231 (PRQQQATRKTTTT) are compositionally biased toward low complexity.

This is an uncharacterized protein from Magallana gigas (Pacific oyster).